A 2104-amino-acid polypeptide reads, in one-letter code: Transmembrane matrix receptor MUP-4 (2104 aa).

The first 15 residues, 1-15 (MRWVPLVLLPLIASA), serve as a signal peptide directing secretion. The Extracellular portion of the chain corresponds to 16-1860 (ATTYQHRQTY…FCETAPSNLP (1845 aa)). EGF-like domains are found at residues 71-110 (VVNE…TSPD), 122-163 (TTNE…VSTS), and 175-213 (SVNE…ASPN). 6 cysteine pairs are disulfide-bonded: C75–C89, C83–C98, C126–C142, C136–C151, C179–C192, and C186–C201. The 46-residue stretch at 220–265 (RVCNKPKAPEYYGQQSRQPQCSEGSGCGPNEECRFNTAGEKVCQCR) folds into the WR1 domain. EGF-like domains follow at residues 278–315 (VFSQ…VSPD), 327–360 (VRNE…SNCI), and 377–416 (AANQ…VSSN). 7 cysteine pairs are disulfide-bonded: C282–C294, C288–C303, C331–C344, C338–C353, C355–C359, C381–C395, and C389–C404. Residues 437-612 (DLVFLIDGSG…DLNTRLRSAI (176 aa)) form the VWFA domain. 2 N-linked (GlcNAc...) asparagine glycosylation sites follow: N494 and N556. EGF-like domains are found at residues 728–772 (SNDE…NKCE) and 819–857 (LIDE…KSPE). Intrachain disulfides connect C732–C746, C740–C756, C758–C771, C823–C836, C830–C845, C873–C886, C880–C895, C923–C937, C931–C946, C972–C985, C979–C995, C1020–C1034, C1028–C1046, C1075–C1089, C1083–C1098, C1125–C1139, C1133–C1148, C1173–C1187, C1181–C1196, C1219–C1233, and C1227–C1242. The region spanning 869-907 (QRNECLDGTHNCSMNADCIDLPDGFLCRCKEDFVDISPN) is the EGF-like 9; calcium-binding domain. N879 carries an N-linked (GlcNAc...) asparagine glycan. EGF-like domains are found at residues 919-958 (LVNE…HDEL), 968-1007 (LNQI…KSPL), 1016-1058 (VEPI…VGAV), 1071-1110 (LVNE…ESPV), 1121-1160 (LVNE…QKPE), 1169-1208 (IINE…EMPS), and 1215-1254 (RFDE…EISD). Residue N1037 is glycosylated (N-linked (GlcNAc...) asparagine). N1132 carries N-linked (GlcNAc...) asparagine glycosylation. N1271, N1403, and N1576 each carry an N-linked (GlcNAc...) asparagine glycan. SEA domains follow at residues 1322–1444 (PTTS…DDAD) and 1495–1620 (AVES…PEQL). 3 consecutive EGF-like domains span residues 1622 to 1658 (PFSN…LNPS), 1669 to 1705 (GVNE…YVNS), and 1717 to 1754 (SIDY…LRKS). Intrachain disulfides connect C1626/C1637, C1631/C1646, C1673/C1687, C1681/C1696, C1721/C1733, C1727/C1742, C1776/C1789, C1783/C1798, C1821/C1830, C1824/C1841, and C1843/C1852. N-linked (GlcNAc...) asparagine glycans are attached at residues N1730 and N1782. In terms of domain architecture, EGF-like 20; calcium-binding spans 1772 to 1810 (DIDECALGLHNCSAAAICIDKKIGYECQCQEGYEDGNPS). The EGF-like 21 domain occupies 1817 to 1853 (AASLCGLCNGHGDCIHDALSSNVTCACLDGYTGQFCE). N1838 is a glycosylation site (N-linked (GlcNAc...) asparagine). A helical membrane pass occupies residues 1861–1881 (LILMTLLALLFLLLTLLCCLY). Topologically, residues 1882–2104 (MCARCRCFGA…TTKAEEVNYF (223 aa)) are cytoplasmic. Low complexity predominate over residues 2031–2040 (SGAMMSSASG). The segment at 2031–2104 (SGAMMSSASG…TTKAEEVNYF (74 aa)) is disordered. 2 stretches are compositionally biased toward basic and acidic residues: residues 2062–2076 (VYDR…HDFE) and 2083–2104 (TGTE…VNYF).

As to expression, abundant at hypodermal cell-matrix junctions overlying muscle of threefold embryos. Expression continues in body wall muscle in larvae and adults and is also detected in other regions where cells show mechanical attachment to the hypodermis including the inner surface of the pharynx, overlying anal and intestinal muscles, overlying vulval and uterine sex muscles, male tail muscle attachment zones and the six mechanosensory neurons (at protein level).

The protein resides in the cell junction. The protein localises to the hemidesmosome. Its subcellular location is the cytoplasm. It is found in the cytoskeleton. It localises to the cell membrane. Its function is as follows. Required for junctional attachments between hypodermis and muscle, and between the apical epithelial surface and the cuticular matrix. Essential for enclosure of the embryo by the hypodermis, hypodermal integrity, embryo elongation, and maintenance of hypodermal morphology in fully elongated embryos. This chain is Transmembrane matrix receptor MUP-4, found in Caenorhabditis elegans.